A 312-amino-acid chain; its full sequence is Methionyl-tRNA formyltransferase (312 aa).

110 to 113 (SLLP) provides a ligand contact to (6S)-5,6,7,8-tetrahydrofolate.

It belongs to the Fmt family.

It catalyses the reaction L-methionyl-tRNA(fMet) + (6R)-10-formyltetrahydrofolate = N-formyl-L-methionyl-tRNA(fMet) + (6S)-5,6,7,8-tetrahydrofolate + H(+). Functionally, attaches a formyl group to the free amino group of methionyl-tRNA(fMet). The formyl group appears to play a dual role in the initiator identity of N-formylmethionyl-tRNA by promoting its recognition by IF2 and preventing the misappropriation of this tRNA by the elongation apparatus. The chain is Methionyl-tRNA formyltransferase from Streptococcus suis (strain 05ZYH33).